A 1507-amino-acid chain; its full sequence is MEPLDQRRTDSDQEEGFGVQSRRATDLGMVPNLRRSNSSLCKSRRLLCSFSSEKQENLSSWIPENIKKKECVYFVESSKLSDAGKVVCECGYTHEQHIEVAIKPHTFQGKEWDPKKHVHEMPTDAFGDIVFTGLSQKVGKYVRLSQDTSSIVIYQLMTQHWGLDVPSLLISVTGGAKNFNMKLRLKSIFRRGLVKVAQTTGAWIITGGSHTGVMKQVGEAVRDFSLSSSCKEGDVITIGIATWGTIHNREALIHPMGGFPAEYMLDEEGQGNLTCLDSNHSHFILVDDGTHGQYGVEIPLRTKLEKFISEQTKERGGVAIKIPIVCVVLEGGPGTLHTIYNAITNGTPCVIVEGSGRVADVIAQVAALPVSEITISLIQQKLSVFFQEMFETFTENQIVEWTKKIQDIVRRRQLLTVFREGKDGQQDVDVAILQALLKASRSQDHFGHENWDHQLKLAVAWNRVDIARSEIFTDEWQWKPSDLHPMMTAALISNKPEFVRLFLENGVRLKEFVTWDTLLCLYENLEPSCLFHSKLQKVLAEEHERLAYASETPRLQMHHVAQVLRELLGDSTQLLYPRPRYTDRPRLSLPMPHIKLNVQGVSLRSLYKRSTGHVTFTIDPVRDLLIWAIIQNHRELAGIIWAQSQDCTAAALACSKILKELSKEEEDTDSSEEMLALADEFEHRAIGVFTECYRKDEERAQKLLVRVSEAWGKTTCLQLALEAKDMKFVSHGGIQAFLTKVWWGQLCVDNGLWRIILCMLAFPLLFTGFISFREKRLQALCRLARVRAFFNAPVVIFYLNILSYFAFLCLFAYVLMVDFQPSPSWCEYLIYLWLFSLVCEETRQLFYDPDGCGLMKMASLYFSDFWNKLDVGAILLFIAGLTCRLIPATLYPGRIILSLDFIMFCLRLMHIFTISKTLGPKIIIVKRMMKDVFFFLFLLAVWVVSFGVAKQAILIHNESRVDWIFRGVIYHSYLTIFGQIPTYIDGVNFSMDQCSPNGTDPYKPKCPESDWTGQAPAFPEWLTVTLLCLYLLFANILLLNLLIAMFNYTFQEVQEHTDQIWKFQRHDLIEEYHGRPPAPPPLILLSHLQLLIKRIVLKIPAKRHKQLKNKLEKNEEAALLSWELYLKENYLQNQQYQHKQRPEQKIQDISEKVDTMVDLLDMDRVKRSGSTEQRLASLEEQVTQMGRSLHWIVTTLKDSGFGSGAGALTLAQRAFDEPDAELSIRKKGEEGGDGYHVSARHLLYPDARIMRFPVPNEKVPWEAEFLIYDPPFYTAEKKDATLTDPVGDTAEPLSKINYNVVDGLMDRCSFHGTYVVQYGFPLNPMGRTGLRGRGSLSWFGPNHTLQPVVTRWKRNQGGGICRKSVRKMLEVLVVKLPQSEHWALPGGSREPGKMLPRKLKQVLQQEYWVTFETLLRQGTEVYKGYVDDPRNTDNAWIETVAVSIHFQDQNDVELKRLEENLQTHDPKESARGLEMSTEWQVVDRRIPLYVNHKKILQKVASLFGAHF.

Basic and acidic residues predominate over residues 1-11 (MEPLDQRRTDS). The interval 1 to 24 (MEPLDQRRTDSDQEEGFGVQSRRA) is disordered. Residues 1 to 751 (MEPLDQRRTD…WWGQLCVDNG (751 aa)) are Cytoplasmic-facing. Residues Thr173, Asn178, Arg301, Gly332, and Thr335 each contribute to the ADP-D-ribose site. Thr739 carries the post-translational modification Phosphothreonine. Residues 752-768 (LWRIILCMLAFPLLFTG) lie within the membrane without spanning it. Topologically, residues 769-793 (FISFREKRLQALCRLARVRAFFNAP) are cytoplasmic. A helical membrane pass occupies residues 794-814 (VVIFYLNILSYFAFLCLFAYV). Residues 815–825 (LMVDFQPSPSW) lie on the Extracellular side of the membrane. Residues 826–846 (CEYLIYLWLFSLVCEETRQLF) traverse the membrane as a helical segment. Ca(2+) contacts are provided by Glu841 and Gln844. Topologically, residues 847–865 (YDPDGCGLMKMASLYFSDF) are cytoplasmic. Residues 866–886 (WNKLDVGAILLFIAGLTCRLI) form a helical membrane-spanning segment. Residue Asn867 participates in Ca(2+) binding. At 887–894 (PATLYPGR) the chain is on the extracellular side. A helical membrane pass occupies residues 895–915 (IILSLDFIMFCLRLMHIFTIS). At 916–927 (KTLGPKIIIVKR) the chain is on the cytoplasmic side. Residues 928 to 948 (MMKDVFFFLFLLAVWVVSFGV) form a helical membrane-spanning segment. The Extracellular segment spans residues 949–968 (AKQAILIHNESRVDWIFRGV). Residues 969 to 983 (IYHSYLTIFGQIPTY) constitute an intramembrane region (pore-forming). A Selectivity filter motif is present at residues 977 to 980 (FGQI). At 984 to 1020 (IDGVNFSMDQCSPNGTDPYKPKCPESDWTGQAPAFPE) the chain is on the extracellular side. Cys994 and Cys1006 form a disulfide bridge. A helical transmembrane segment spans residues 1021-1042 (WLTVTLLCLYLLFANILLLNLL). At 1043–1077 (IAMFNYTFQEVQEHTDQIWKFQRHDLIEEYHGRPP) the chain is on the cytoplasmic side. Residue Glu1071 coordinates Ca(2+). Residues 1078–1096 (APPPLILLSHLQLLIKRIV) lie within the membrane without spanning it. Topologically, residues 1097-1507 (LKIPAKRHKQ…KVASLFGAHF (411 aa)) are cytoplasmic. Residues 1351-1502 (RWKRNQGGGI…KKILQKVASL (152 aa)) enclose the Nudix hydrolase domain. Ser1379 contacts ADP-D-ribose. The Nudix box signature appears at 1387 to 1408 (GSREPGKMLPRKLKQVLQQEYW). Residues Asp1428, Arg1430, Tyr1489, and Asn1491 each coordinate ADP-D-ribose.

The protein belongs to the transient receptor (TC 1.A.4) family. LTrpC subfamily. TRPM2 sub-subfamily. Homotetramer. Phosphorylation of TRPM2 at Thr-739 by protein kinase C (PKC) counteracts the effect of cytosolic Ca(2+) and elevates the temperature threshold. In terms of tissue distribution, detected in pancreas beta-cells. Detected in fetal brain cortex neurons (at protein level).

It is found in the cell membrane. Its subcellular location is the perikaryon. The protein resides in the cell projection. The protein localises to the cytoplasmic vesicle. It localises to the lysosome. The enzyme catalyses Ca(2+)(in) = Ca(2+)(out). The catalysed reaction is Na(+)(in) = Na(+)(out). With respect to regulation, activated by intracellular ADP-ribose, beta-NAD (NAD(+)) and similar compounds, and by oxidative stress caused by reactive oxygen or nitrogen species. Ca(2+) and PI(4,5)P2 are required for channel opening by ADP-ribose. Activation by ADP-ribose and beta-NAD is strongly increased by moderate heat (35 to 40 degrees Celsius). Likewise, reactive oxygen species lower the threshold for activation by moderate heat (37 degrees Celsius). Activated by moderate heat (35 to 40 degrees Celsius). Inactivated by exposure to extracellular pH between 4.0 and 6.5; irreversibly inactivated when open channels are exposed to extracellular pH between 4.0 and 6.5, while pre-exposure of closed channels to extracellular pH 5.5 gives rise to currents that rapidly inactivate, but protects against irreversible inactivation. Inactivated by intracellular ATP. Activated by arachidonic acid. Inhibited by 2-aminoethyl diphenylborinate (2-APB). Its function is as follows. Nonselective, voltage-independent cation channel that mediates Na(+) and Ca(2+) influx, leading to increased cytoplasmic Ca(2+) levels. Functions as a ligand-gated ion channel gated by intracellular adenosine diphosphate ribose (ADP-ribose), Ca(2+), warm temperature, and oxidative stress. The precise physiological activators are under debate; the true, physiological activators may be ADP-ribose and ADP-ribose-2'-phosphate. Binding of ADP-ribose to the cytoplasmic Nudix domain causes a conformation change; the channel is primed but still requires Ca(2+) binding to trigger channel opening. Extracellular Ca(2+) passes through the channel and increases channel activity. Also contributes to Ca(2+) release from intracellular stores in response to ADP-ribose. Plays a role in numerous processes that involve signaling via intracellular Ca(2+) levels. Besides, mediates the release of lysosomal Zn(2+) stores in response to reactive oxygen species, leading to increased cytosolic Zn(2+) levels. Plays a role in insulin secretion, a process that requires increased cytoplasmic Ca(2+) levels. Required for normal IFNG and cytokine secretion and normal innate immune immunity in response to bacterial infection. Required for normal phagocytosis and cytokine release by macrophages exposed to zymosan (in vitro). Plays a role in dendritic cell differentiation and maturation, and in dendritic cell chemotaxis via its role in regulating cytoplasmic Ca(2+) levels. Plays a role in the regulation of the reorganization of the actin cytoskeleton and filopodia formation in response to reactive oxygen species via its function in increasing cytoplasmic Ca(2+) and Zn(2+) levels. Confers susceptibility to cell death following oxidative stress. This is Transient receptor potential cation channel subfamily M member 2 from Rattus norvegicus (Rat).